We begin with the raw amino-acid sequence, 218 residues long: Protein OPG170 (218 aa).

A signal peptide spans 1 to 16 (MYSLVFVILMCIPFSF). The N-linked (GlcNAc...) asparagine; by host glycan is linked to N70.

This sequence belongs to the orthopoxvirus OPG170 family.

The protein resides in the secreted. Its function is as follows. May interact with several cellular chemokines to interfere with chemokine-glycosaminoglycan (GAG) interactions at the cell surface to alter chemotaxis of nearby responsive cells. This is Protein OPG170 (OPG170) from Homo sapiens (Human).